A 259-amino-acid polypeptide reads, in one-letter code: Mediator of RNA polymerase II transcription subunit 7 (259 aa).

3 disordered regions span residues 1 to 52 (MAEP…EWSP), 99 to 118 (TQLYPSSPKPDTKSGDSSQP), and 223 to 242 (GSTIQSTTKDKKGVKPEDQI). Positions 31-44 (ENIKKEASKGEDGR) are enriched in basic and acidic residues. A compositionally biased stretch (basic and acidic residues) spans 230–242 (TKDKKGVKPEDQI).

Belongs to the Mediator complex subunit 7 family. Component of the Mediator complex.

It is found in the nucleus. Its function is as follows. Component of the Mediator complex, a coactivator involved in the regulated transcription of nearly all RNA polymerase II-dependent genes. Mediator functions as a bridge to convey information from gene-specific regulatory proteins to the basal RNA polymerase II transcription machinery. Mediator is recruited to promoters by direct interactions with regulatory proteins and serves as a scaffold for the assembly of a functional preinitiation complex with RNA polymerase II and the general transcription factors. The sequence is that of Mediator of RNA polymerase II transcription subunit 7 (med7) from Emericella nidulans (strain FGSC A4 / ATCC 38163 / CBS 112.46 / NRRL 194 / M139) (Aspergillus nidulans).